Here is a 372-residue protein sequence, read N- to C-terminus: 3-galactosyl-N-acetylglucosaminide 4-alpha-L-fucosyltransferase FUT3 (372 aa).

Residues 1–15 (MDPLGAAKPQWPWRR) lie on the Cytoplasmic side of the membrane. Residues 16–34 (CLAALLFQLLVAVCFFSYL) form a helical; Signal-anchor for type II membrane protein membrane-spanning segment. At 35–372 (RVSRDDATGS…TMRSIAAWFT (338 aa)) the chain is on the lumenal side. The interval 40-69 (DATGSPRPGLMAVEPVTGAPSGSSRQDTTP) is disordered. Residues Asn165 and Asn196 are each glycosylated (N-linked (GlcNAc...) asparagine).

This sequence belongs to the glycosyltransferase 10 family. Glycosylated.

It localises to the golgi apparatus. The protein resides in the golgi stack membrane. The enzyme catalyses a beta-D-galactosyl-(1-&gt;3)-N-acetyl-beta-D-glucosaminyl derivative + GDP-beta-L-fucose = a beta-D-galactosyl-(1-&gt;3)-[alpha-L-fucosyl-(1-&gt;4)]-N-acetyl-beta-D-glucosaminyl derivative + GDP + H(+). The catalysed reaction is an N-acetyl-alpha-neuraminyl-(2-&gt;3)-beta-D-galactosyl-(1-&gt;4)-N-acetyl-beta-D-glucosaminyl derivative + GDP-beta-L-fucose = an alpha-Neu5Ac-(2-&gt;3)-beta-D-Gal-(1-&gt;4)-[alpha-L-Fuc-(1-&gt;3)]-beta-D-GlcNAc derivative + GDP + H(+). It catalyses the reaction a beta-D-galactosyl-(1-&gt;4)-N-acetyl-beta-D-glucosaminyl derivative + GDP-beta-L-fucose = a beta-D-galactosyl-(1-&gt;4)-[alpha-L-fucosyl-(1-&gt;3)]-N-acetyl-beta-D-glucosaminyl derivative + GDP + H(+). It carries out the reaction an alpha-Neu5Ac-(2-&gt;3)-beta-D-Gal-(1-&gt;4)-beta-D-GlcNAc-(1-&gt;3)-beta-D-Gal-(1-&gt;4)-[alpha-L-Fuc-(1-&gt;3)]-beta-D-GlcNAc derivative + GDP-beta-L-fucose = an alpha-Neu5Ac-(2-&gt;3)-beta-D-Gal-(1-&gt;4)-[alpha-L-Fuc-(1-&gt;3)]-beta-D-GlcNAc-(1-&gt;3)-beta-D-Gal-(1-&gt;4)-[alpha-L-Fuc-(1-&gt;3)]-beta-D-GlcNAc derivative + GDP + H(+). The enzyme catalyses Lc4Cer + GDP-beta-L-fucose = a lactoside III(4)-a-Fuc-Lc4Cer + GDP + H(+). The catalysed reaction is a beta-D-Gal-(1-&gt;3)-beta-D-GlcNAc-(1-&gt;3)-beta-D-Gal-(1-&gt;4)-beta-D-Glc-(1&lt;-&gt;1')-Cer(d18:1(4E)) + GDP-beta-L-fucose = a III(4)-a-Fuc-Lc4Cer(d18:1(4E)) + GDP + H(+). It catalyses the reaction N-acetyl-alpha-neuraminosyl-(2-&gt;3)-beta-D-galactosyl-(1-&gt;3)-[N-acetyl-alpha-neuraminosyl-(2-&gt;6)]-N-acetyl-beta-D-glucosaminyl-(1-&gt;3)-beta-D-galactosyl-(1-&gt;4)-beta-D-glucosyl-(1&lt;-&gt;1')-N-acyl-sphing-4-enine + GDP-beta-L-fucose = N-acetyl-alpha-neuraminosyl-(2-&gt;3)-beta-D-galactosyl-(1-&gt;3)-alpha-L-fucosyl-(1-&gt;4)-[N-acetyl-alpha-neuraminosyl-(2-&gt;6)-N-acetyl-beta-D-glucosaminyl-(1-&gt;3)]-beta-D-galactosyl-(1-&gt;4)-beta-D-glucosyl-(1&lt;-&gt;1')-N-acyl-sphing-4-enine + GDP + H(+). It carries out the reaction N-acetyl-alpha-neuraminosyl-(2-&gt;3)-beta-D-galactosyl-(1-&gt;3)-N-acetyl-beta-D-glucosaminyl-(1-&gt;3)-beta-D-galactosyl-(1-&gt;4)-beta-D-glucosyl-(1&lt;-&gt;1')-N-acyl-sphing-4-enine + GDP-beta-L-fucose = N-acetyl-alpha-neuraminosyl-(2-&gt;3)-beta-D-galactosyl-(1-&gt;3)-alpha-L-fucosyl-(1-&gt;4)-[N-acetyl-beta-D-glucosaminyl-(1-&gt;3)]-beta-D-galactosyl-(1-&gt;4)-beta-D-glucosyl-(1&lt;-&gt;1')-N-acyl-sphing-4-enine + GDP + H(+). The enzyme catalyses beta-D-galactosyl-(1-&gt;3)-N-acetyl-D-glucosamine + GDP-beta-L-fucose = beta-D-galactosyl-(1-&gt;3)-[alpha-L-fucosyl-(1-&gt;4)]-N-acetyl-D-glucosamine + GDP + H(+). The catalysed reaction is alpha-L-Fuc-(1-&gt;2)-beta-D-Gal-(1-&gt;3)-D-GlcNAc + GDP-beta-L-fucose = alpha-L-Fuc-(1-&gt;2)-beta-D-Gal-(1-&gt;3)-[alpha-L-Fuc-(1-&gt;4)]-D-GlcNAc + GDP + H(+). It catalyses the reaction alpha-L-Fuc-(1-&gt;2)-beta-D-Gal-(1-&gt;4)-D-GlcNAc + GDP-beta-L-fucose = alpha-L-Fuc-(1-&gt;2)-beta-D-Gal-(1-&gt;4)-[alpha-L-Fuc-(1-&gt;3)]-D-GlcNAc + GDP + H(+). It carries out the reaction beta-D-galactosyl-(1-&gt;4)-N-acetyl-D-glucosamine + GDP-beta-L-fucose = beta-D-galactosyl-(1-&gt;4)-[alpha-L-fucosyl-(1-&gt;3)]-N-acetyl-D-glucosamine + GDP + H(+). The enzyme catalyses lactose + GDP-beta-L-fucose = beta-D-galactosyl-(1-&gt;4)-[alpha-L-fucosyl-(1-&gt;3)]-D-glucose + GDP + H(+). The catalysed reaction is an alpha-Neu5Ac-(2-&gt;3)-beta-D-Gal-(1-&gt;3)-D-GlcNAc derivative + GDP-beta-L-fucose = an alpha-Neu5Ac-(2-&gt;3)-beta-D-Gal-(1-&gt;3)-[alpha-L-Fuc-(1-&gt;4)]-beta-D-GlcNAc derivative + GDP + H(+). It functions in the pathway protein modification; protein glycosylation. Functionally, catalyzes the transfer of L-fucose, from a guanosine diphosphate-beta-L-fucose, to both the subterminal N-acetyl glucosamine (GlcNAc) of type 1 chain (beta-D-Gal-(1-&gt;3)-beta-D-GlcNAc) glycolipids and oligosaccharides via an alpha(1,4) linkage, and the subterminal glucose (Glc) or GlcNAc of type 2 chain (beta-D-Gal-(1-&gt;4)-beta-D-GlcNAc) oligosaccharides via an alpha(1,3) linkage, independently of the presence of terminal alpha-L-fucosyl-(1,2) moieties on the terminal galactose of these acceptors and participates in the blood groups Lewis determination and expression of Lewis a (Le(a)), lewis b (Le(b)), Lewis x/SSEA-1 (Le(x)) and lewis y (Le(y)) antigens. Also catalyzes the transfer of L-fucose to subterminal GlcNAc of sialyl- and disialyl-lactotetraosylceramide to produce sialyl Lewis a (sLe(a)) and disialyl Lewis a via an alpha(1,4) linkage and therefore may regulate cell surface sialyl Lewis a expression and consequently regulates adhesive properties to E-selectin, cell proliferation and migration. Catalyzes the transfer of an L-fucose to 3'-sialyl-N-acetyllactosamine by an alpha(1,3) linkage, which allows the formation of sialyl-Lewis x structure and therefore may regulate the sialyl-Lewis x surface antigen expression and consequently adhesive properties to E-selectin. Prefers type 1 chain over type 2 acceptors. Type 1 tetrasaccharide is a better acceptor than type 1 disaccharide suggesting that a beta anomeric configuration of GlcNAc in the substrate is preferred. Lewis-positive (Le(+)) individuals have an active enzyme while Lewis-negative (Le(-)) individuals have an inactive enzyme. The polypeptide is 3-galactosyl-N-acetylglucosaminide 4-alpha-L-fucosyltransferase FUT3 (Pan troglodytes (Chimpanzee)).